The chain runs to 117 residues: Large ribosomal subunit protein bL20 (117 aa).

Belongs to the bacterial ribosomal protein bL20 family.

Binds directly to 23S ribosomal RNA and is necessary for the in vitro assembly process of the 50S ribosomal subunit. It is not involved in the protein synthesizing functions of that subunit. In Mesomycoplasma hyopneumoniae (strain 7448) (Mycoplasma hyopneumoniae), this protein is Large ribosomal subunit protein bL20.